A 376-amino-acid polypeptide reads, in one-letter code: Inactive 2'-5'-oligoadenylate synthase 1B (376 aa).

The Cytoplasmic portion of the chain corresponds to 1–351; sequence MEQDLRSIPA…VPTEVGVPMK (351 aa). Residues 352–370 form a helical; Anchor for type IV membrane protein membrane-spanning segment; it reads YLLCRIFWLLFWSLFHFIF. Residues 371–376 are Extracellular-facing; the sequence is GKTSSG.

Belongs to the 2-5A synthase family. In terms of assembly, interacts with OSBPL1A and ABCF3. As to expression, highly expressed in lung, spleen and thymus. Also detected at lower levels in heart, kidney, liver, lung, skeletal muscle, testes, uterus and ovaries.

It is found in the endoplasmic reticulum membrane. In terms of biological role, does not have 2'-5'-OAS activity, but can bind double-stranded RNA. The full-length protein displays antiviral activity against flaviviruses such as west Nile virus (WNV) via an alternative antiviral pathway independent of RNase L. The truncated form of the protein lacks antiviral activity. This is Inactive 2'-5'-oligoadenylate synthase 1B (Oas1b) from Mus musculus (Mouse).